Reading from the N-terminus, the 267-residue chain is MKTIAAYLVLVFYASTALSESISENLAWNKEFSSESVHGVFVLCKSSSNSCTTNNAARASTAYIPASTFKIPNALIGLETGAIKDERQVFKWDGKPRAMKQWEKDLKLRGAIQVSAVPVFQQIAREVGEIRMQKYLNLFSYGNANIGGGIDKFWLEGQLRISAFNQVKFLESLYLNNLPASKANQLIVKEAIVTEATPEYIVHSKTGYSGVGTESSPGVAWWVGWVEKGTEVYFFAFNMDIDNESKLPSRKSISTKIMASEGIIIGG.

The first 19 residues, 1–19 (MKTIAAYLVLVFYASTALS), serve as a signal peptide directing secretion. Catalysis depends on Ser67, which acts as the Acyl-ester intermediate. Position 70 is an N6-carboxylysine (Lys70). 205–207 (KTG) contributes to the substrate binding site.

It belongs to the class-D beta-lactamase family.

The catalysed reaction is a beta-lactam + H2O = a substituted beta-amino acid. Inhibited by clavulanic acid. Hydrolyzes both oxacillin and methicillin. This Pseudomonas aeruginosa protein is Beta-lactamase OXA-5 (bla).